A 288-amino-acid chain; its full sequence is Aquaporin NIP2-1 (288 aa).

Methionine 1 bears the N-acetylmethionine mark. 2 helical membrane passes run 50–70 (LLAE…AIAV) and 77–97 (VVTL…LVYC). Positions 106–108 (NPA) match the NPA 1 motif. The next 3 helical transmembrane spans lie at 126–146 (AYIT…RLLF), 170–190 (LQAF…VCAV), and 202–222 (GLII…VSGA). An NPA 2 motif is present at residues 225–227 (NPA). The chain crosses the membrane as a helical span at residues 234 to 254 (LVWGCYKGIWIYLLAPTLGAV). Serine 278 is modified (phosphoserine).

This sequence belongs to the MIP/aquaporin (TC 1.A.8) family. NIP (TC 1.A.8.12) subfamily. In terms of tissue distribution, specifically expressed in roots with high expression in root elongation zone and root stele.

Its subcellular location is the endoplasmic reticulum membrane. Its function is as follows. Low water transport activity in yeast cells. In Arabidopsis thaliana (Mouse-ear cress), this protein is Aquaporin NIP2-1 (NIP2-1).